A 152-amino-acid chain; its full sequence is D-aminoacyl-tRNA deacylase (152 aa).

A Gly-cisPro motif, important for rejection of L-amino acids motif is present at residues 142–143; the sequence is GP.

Belongs to the DTD family. Homodimer.

It localises to the cytoplasm. The enzyme catalyses glycyl-tRNA(Ala) + H2O = tRNA(Ala) + glycine + H(+). It catalyses the reaction a D-aminoacyl-tRNA + H2O = a tRNA + a D-alpha-amino acid + H(+). In terms of biological role, an aminoacyl-tRNA editing enzyme that deacylates mischarged D-aminoacyl-tRNAs. Also deacylates mischarged glycyl-tRNA(Ala), protecting cells against glycine mischarging by AlaRS. Acts via tRNA-based rather than protein-based catalysis; rejects L-amino acids rather than detecting D-amino acids in the active site. By recycling D-aminoacyl-tRNA to D-amino acids and free tRNA molecules, this enzyme counteracts the toxicity associated with the formation of D-aminoacyl-tRNA entities in vivo and helps enforce protein L-homochirality. This chain is D-aminoacyl-tRNA deacylase, found in Burkholderia cenocepacia (strain ATCC BAA-245 / DSM 16553 / LMG 16656 / NCTC 13227 / J2315 / CF5610) (Burkholderia cepacia (strain J2315)).